The sequence spans 634 residues: Chaperone protein DnaK (634 aa).

T198 bears the Phosphothreonine; by autocatalysis mark. Residues 599 to 634 (KQTQEGAEAASEAGEQSAGDEGVVDAEFEEVDEQNK) form a disordered region. Residues 602–619 (QEGAEAASEAGEQSAGDE) show a composition bias toward low complexity. A compositionally biased stretch (acidic residues) spans 620–634 (GVVDAEFEEVDEQNK).

Belongs to the heat shock protein 70 family.

Acts as a chaperone. The sequence is that of Chaperone protein DnaK from Syntrophotalea carbinolica (strain DSM 2380 / NBRC 103641 / GraBd1) (Pelobacter carbinolicus).